Reading from the N-terminus, the 293-residue chain is Ribosomal protein L11 methyltransferase (293 aa).

Residues Thr145, Gly166, Asp188, and Asn230 each contribute to the S-adenosyl-L-methionine site.

It belongs to the methyltransferase superfamily. PrmA family.

The protein localises to the cytoplasm. The enzyme catalyses L-lysyl-[protein] + 3 S-adenosyl-L-methionine = N(6),N(6),N(6)-trimethyl-L-lysyl-[protein] + 3 S-adenosyl-L-homocysteine + 3 H(+). Its function is as follows. Methylates ribosomal protein L11. This Salmonella arizonae (strain ATCC BAA-731 / CDC346-86 / RSK2980) protein is Ribosomal protein L11 methyltransferase.